We begin with the raw amino-acid sequence, 150 residues long: Flagellar assembly factor FliW (150 aa).

The protein belongs to the FliW family. As to quaternary structure, interacts with translational regulator CsrA and flagellin(s).

The protein localises to the cytoplasm. Acts as an anti-CsrA protein, binds CsrA and prevents it from repressing translation of its target genes, one of which is flagellin. Binds to flagellin and participates in the assembly of the flagellum. The polypeptide is Flagellar assembly factor FliW (Leptospira borgpetersenii serovar Hardjo-bovis (strain JB197)).